Consider the following 218-residue polypeptide: Thiopurine S-methyltransferase (218 aa).

S-adenosyl-L-methionine-binding residues include W10, L45, E66, and R123.

This sequence belongs to the class I-like SAM-binding methyltransferase superfamily. TPMT family.

It localises to the cytoplasm. It catalyses the reaction S-adenosyl-L-methionine + a thiopurine = S-adenosyl-L-homocysteine + a thiopurine S-methylether.. The chain is Thiopurine S-methyltransferase from Pseudomonas aeruginosa (strain ATCC 15692 / DSM 22644 / CIP 104116 / JCM 14847 / LMG 12228 / 1C / PRS 101 / PAO1).